Here is a 664-residue protein sequence, read N- to C-terminus: Methionine--tRNA ligase (664 aa).

The 'HIGH' region signature appears at 13-23 (PYTNGPCHLGH). The Zn(2+) site is built by Cys144, Cys147, Cys156, and Cys160. Positions 327 to 331 (KFSKS) match the 'KMSKS' region motif. Lys330 contacts ATP. The tRNA-binding domain maps to 566-664 (EFAKVEMKTG…TPVPSGTKIR (99 aa)).

The protein belongs to the class-I aminoacyl-tRNA synthetase family. MetG type 1 subfamily. Homodimer. Requires Zn(2+) as cofactor.

The protein resides in the cytoplasm. The catalysed reaction is tRNA(Met) + L-methionine + ATP = L-methionyl-tRNA(Met) + AMP + diphosphate. Functionally, is required not only for elongation of protein synthesis but also for the initiation of all mRNA translation through initiator tRNA(fMet) aminoacylation. The sequence is that of Methionine--tRNA ligase from Methanospirillum hungatei JF-1 (strain ATCC 27890 / DSM 864 / NBRC 100397 / JF-1).